A 250-amino-acid polypeptide reads, in one-letter code: MSQAAMTPAEFEQALRAKGALYHIHHPFHRAMYEGRATREQIQGWVANRFYYQVNIPLKDAAILANCPDRETRREWIQRILDHDGAPGEEGGIEAWLRLAESVGLDREQVLSQELVLPGVRFAVDAYVNFARRASWQEAASSSLTELFAPTIHQSRLDAWPQHYPWIDAAGYDYFRNRLSQARRDVEHGLRITLEHYRTRDAQEHMLNILQFKLDVLWSMLDAMSMAYELERPPYHTVTAERVWHKGIDL.

Belongs to the PqqC family.

The enzyme catalyses 6-(2-amino-2-carboxyethyl)-7,8-dioxo-1,2,3,4,7,8-hexahydroquinoline-2,4-dicarboxylate + 3 O2 = pyrroloquinoline quinone + 2 H2O2 + 2 H2O + H(+). Its pathway is cofactor biosynthesis; pyrroloquinoline quinone biosynthesis. Ring cyclization and eight-electron oxidation of 3a-(2-amino-2-carboxyethyl)-4,5-dioxo-4,5,6,7,8,9-hexahydroquinoline-7,9-dicarboxylic-acid to PQQ. This chain is Pyrroloquinoline-quinone synthase, found in Ectopseudomonas mendocina (strain ymp) (Pseudomonas mendocina).